The sequence spans 111 residues: X antigen family member 2 (111 aa).

Disordered stretches follow at residues methionine 1 to isoleucine 61 and lysine 77 to valine 111. Residues threonine 86 to valine 111 are compositionally biased toward basic and acidic residues.

This sequence belongs to the GAGE family.

The polypeptide is X antigen family member 2 (XAGE2) (Homo sapiens (Human)).